A 205-amino-acid chain; its full sequence is Ras-related protein Rab-1A (205 aa).

Serine 2 is modified (N-acetylserine). GTP contacts are provided by serine 20, glycine 21, glycine 23, lysine 24, serine 25, cysteine 26, glutamate 38, and threonine 43. Residue serine 25 coordinates Mg(2+). A Switch 1 motif is present at residues 34–48; it reads DTYTESYISTIGVDF. Threonine 43 serves as a coordination point for Mg(2+). Glycyl lysine isopeptide (Lys-Gly) (interchain with G-Cter in ubiquitin) cross-links involve residues lysine 49 and lysine 61. Aspartate 66 is a binding site for Mg(2+). Residues 66–83 carry the Switch 2 motif; it reads DTAGQERFRTITSSYYRG. Positions 69, 124, 125, 127, 155, and 156 each coordinate GTP. The segment at 178–205 is disordered; it reads PGATAGGAEKSNVKIQSTPVKQSGGGCC. Serine 194 is subject to Phosphoserine. 2 S-geranylgeranyl cysteine lipidation sites follow: cysteine 204 and cysteine 205.

The protein belongs to the small GTPase superfamily. Rab family. May interact with YIPF5. Interacts with C9orf72; the interaction mediates recruitment of RAB1A to the ATG1/ULK1 kinase complex. Interacts with GDI1; this promotes dissociation from membranes. Mg(2+) serves as cofactor. Post-translationally, phosphorylated by CDK1 kinase during mitosis. In terms of processing, ubiquitinated via 'Lys-11'-linked ubiquitination on Lys-49 and Lys-61; impairing the recruitment of guanosine diphosphate (GDP) dissociation inhibitor 1/GDI1.

It is found in the golgi apparatus. The protein localises to the endoplasmic reticulum. Its subcellular location is the early endosome. The protein resides in the cytoplasm. It localises to the cytosol. It is found in the membrane. The protein localises to the melanosome. It carries out the reaction GTP + H2O = GDP + phosphate + H(+). Regulated by guanine nucleotide exchange factors (GEFs) which promote the exchange of bound GDP for free GTP. Regulated by GTPase activating proteins (GAPs) which increase the GTP hydrolysis activity. Inhibited by GDP dissociation inhibitors (GDIs). Functionally, the small GTPases Rab are key regulators of intracellular membrane trafficking, from the formation of transport vesicles to their fusion with membranes. Rabs cycle between an inactive GDP-bound form and an active GTP-bound form that is able to recruit to membranes different sets of downstream effectors directly responsible for vesicle formation, movement, tethering and fusion. RAB1A regulates vesicular protein transport from the endoplasmic reticulum (ER) to the Golgi compartment and on to the cell surface, and plays a role in IL-8 and growth hormone secretion. Required to modulate the compacted morphology of the Golgi. Regulates the level of CASR present at the cell membrane. Plays a role in cell adhesion and cell migration, via its role in protein trafficking. Plays a role in autophagosome assembly and cellular defense reactions against pathogenic bacteria. Plays a role in microtubule-dependent protein transport by early endosomes and in anterograde melanosome transport. This is Ras-related protein Rab-1A (RAB1A) from Canis lupus familiaris (Dog).